The chain runs to 476 residues: Glutamate--tRNA ligase (476 aa).

The short motif at 9-19 (PSPTGTLHLGT) is the 'HIGH' region element. A 'KMSKS' region motif is present at residues 248 to 252 (KLSKR). An ATP-binding site is contributed by Lys-251.

This sequence belongs to the class-I aminoacyl-tRNA synthetase family. Glutamate--tRNA ligase type 1 subfamily. As to quaternary structure, monomer.

The protein resides in the cytoplasm. It catalyses the reaction tRNA(Glu) + L-glutamate + ATP = L-glutamyl-tRNA(Glu) + AMP + diphosphate. Catalyzes the attachment of glutamate to tRNA(Glu) in a two-step reaction: glutamate is first activated by ATP to form Glu-AMP and then transferred to the acceptor end of tRNA(Glu). The polypeptide is Glutamate--tRNA ligase (Prochlorococcus marinus (strain NATL2A)).